Reading from the N-terminus, the 1024-residue chain is Beta-galactosidase (1024 aa).

Residues Asn-103 and Asp-202 each coordinate substrate. Na(+) is bound at residue Asp-202. Residues Glu-417, His-419, and Glu-462 each coordinate Mg(2+). Substrate-binding positions include Glu-462 and 538–541 (EYAH). Glu-462 (proton donor) is an active-site residue. Glu-538 functions as the Nucleophile in the catalytic mechanism. A Mg(2+)-binding site is contributed by Asn-598. Na(+) is bound by residues Phe-602 and Asn-605. Substrate-binding residues include Asn-605 and Trp-1000.

The protein belongs to the glycosyl hydrolase 2 family. In terms of assembly, homotetramer. It depends on Mg(2+) as a cofactor. The cofactor is Na(+).

It carries out the reaction Hydrolysis of terminal non-reducing beta-D-galactose residues in beta-D-galactosides.. This Shigella sonnei (strain Ss046) protein is Beta-galactosidase.